The sequence spans 326 residues: Vacuolar protein sorting-associated protein 26A-A (326 aa).

A disordered region spans residues 306 to 326; it reads TNFHQRFEPQEPQASAEEPEI. The segment covering 315–326 has biased composition (low complexity); that stretch reads QEPQASAEEPEI.

The protein belongs to the VPS26 family. Component of the heterotrimeric retromer cargo-selective complex (CSC) which is believed to associate with variable sorting nexins to form functionally distinct retromer complex variants.

Its subcellular location is the cytoplasm. The protein resides in the endosome membrane. It localises to the early endosome. In terms of biological role, acts as a component of the retromer cargo-selective complex (CSC). The CSC is believed to be the core functional component of retromer or respective retromer complex variants acting to prevent missorting of selected transmembrane cargo proteins into the lysosomal degradation pathway. Retromer mediates retrograde transport of cargo proteins from endosomes to the trans-Golgi network (TGN). This is Vacuolar protein sorting-associated protein 26A-A (vps26a-a) from Xenopus laevis (African clawed frog).